Consider the following 537-residue polypeptide: CTP synthase (537 aa).

The tract at residues 1-267 (MTKYIFVTGG…DQIVLDHFDV (267 aa)) is amidoligase domain. CTP is bound at residue Ser-13. UTP is bound at residue Ser-13. 14-19 (SIGKGI) is a binding site for ATP. Residue Tyr-54 participates in L-glutamine binding. Asp-71 serves as a coordination point for ATP. Positions 71 and 141 each coordinate Mg(2+). CTP is bound by residues 148-150 (DIE), 188-193 (KTKPTQ), and Lys-224. Residues 188-193 (KTKPTQ) and Lys-224 contribute to the UTP site. Positions 292-535 (KIALVGKYVA…IDAANQTGKV (244 aa)) constitute a Glutamine amidotransferase type-1 domain. L-glutamine is bound at residue Gly-354. Cys-381 serves as the catalytic Nucleophile; for glutamine hydrolysis. L-glutamine is bound by residues 382-385 (LGMQ), Glu-405, and Arg-463. Catalysis depends on residues His-508 and Glu-510.

This sequence belongs to the CTP synthase family. Homotetramer.

It catalyses the reaction UTP + L-glutamine + ATP + H2O = CTP + L-glutamate + ADP + phosphate + 2 H(+). The catalysed reaction is L-glutamine + H2O = L-glutamate + NH4(+). The enzyme catalyses UTP + NH4(+) + ATP = CTP + ADP + phosphate + 2 H(+). It functions in the pathway pyrimidine metabolism; CTP biosynthesis via de novo pathway; CTP from UDP: step 2/2. Allosterically activated by GTP, when glutamine is the substrate; GTP has no effect on the reaction when ammonia is the substrate. The allosteric effector GTP functions by stabilizing the protein conformation that binds the tetrahedral intermediate(s) formed during glutamine hydrolysis. Inhibited by the product CTP, via allosteric rather than competitive inhibition. Functionally, catalyzes the ATP-dependent amination of UTP to CTP with either L-glutamine or ammonia as the source of nitrogen. Regulates intracellular CTP levels through interactions with the four ribonucleotide triphosphates. The chain is CTP synthase from Lactiplantibacillus plantarum (strain ATCC BAA-793 / NCIMB 8826 / WCFS1) (Lactobacillus plantarum).